Reading from the N-terminus, the 406-residue chain is Corticosteroid-binding globulin (406 aa).

The N-terminal stretch at 1–22 (MLLTLYACLLWLSTSGLWTSQA) is a signal peptide. 3 N-linked (GlcNAc...) asparagine glycosylation sites follow: asparagine 95, asparagine 119, and asparagine 223. A cortisol-binding site is contributed by glutamine 253. Asparagine 259 carries an N-linked (GlcNAc...) asparagine glycan. 2 residues coordinate cortisol: glutamine 285 and tryptophan 394.

The protein belongs to the serpin family.

The protein resides in the secreted. In terms of biological role, major transport protein for glucocorticoids and progestins in the blood of almost all vertebrate species. This Sus scrofa (Pig) protein is Corticosteroid-binding globulin (Serpina6).